Here is a 375-residue protein sequence, read N- to C-terminus: D-apiose dehydrogenase (375 aa).

Residue 29 to 30 coordinates NAD(+); sequence FF. W38, R39, I41, and A44 together coordinate Mg(2+). NAD(+) is bound by residues D51, S93, 111 to 112, N140, and 179 to 181; these read QK and QPY. K112 is a substrate binding site. Residues Q179, D192, H196, and Y246 each coordinate substrate.

This sequence belongs to the Gfo/Idh/MocA family.

It carries out the reaction D-apiofuranose + NAD(+) = D-apionolactone + NADH + H(+). It participates in carbohydrate metabolism. Its function is as follows. Involved in catabolism of D-apiose. Catalyzes oxidation of D-apiose to D-apionolactone. The chain is D-apiose dehydrogenase from Paraburkholderia graminis (strain ATCC 700544 / DSM 17151 / LMG 18924 / NCIMB 13744 / C4D1M).